Here is a 259-residue protein sequence, read N- to C-terminus: Small ribosomal subunit protein uS2 (259 aa).

It belongs to the universal ribosomal protein uS2 family.

The protein is Small ribosomal subunit protein uS2 of Fervidobacterium nodosum (strain ATCC 35602 / DSM 5306 / Rt17-B1).